The sequence spans 258 residues: Imidazole glycerol phosphate synthase subunit HisF (258 aa).

Catalysis depends on residues Asp-11 and Asp-130.

Belongs to the HisA/HisF family. As to quaternary structure, heterodimer of HisH and HisF.

It localises to the cytoplasm. The enzyme catalyses 5-[(5-phospho-1-deoxy-D-ribulos-1-ylimino)methylamino]-1-(5-phospho-beta-D-ribosyl)imidazole-4-carboxamide + L-glutamine = D-erythro-1-(imidazol-4-yl)glycerol 3-phosphate + 5-amino-1-(5-phospho-beta-D-ribosyl)imidazole-4-carboxamide + L-glutamate + H(+). Its pathway is amino-acid biosynthesis; L-histidine biosynthesis; L-histidine from 5-phospho-alpha-D-ribose 1-diphosphate: step 5/9. IGPS catalyzes the conversion of PRFAR and glutamine to IGP, AICAR and glutamate. The HisF subunit catalyzes the cyclization activity that produces IGP and AICAR from PRFAR using the ammonia provided by the HisH subunit. This chain is Imidazole glycerol phosphate synthase subunit HisF, found in Bradyrhizobium sp. (strain ORS 278).